We begin with the raw amino-acid sequence, 250 residues long: Adenosylcobinamide-GDP ribazoletransferase (250 aa).

The next 6 membrane-spanning stretches (helical) occupy residues Lys32–Tyr52, Leu59–Leu79, Gly113–Glu133, Ile136–Tyr156, Leu185–Ile205, and Cys230–Phe250.

The protein belongs to the CobS family. Mg(2+) serves as cofactor.

The protein resides in the cell membrane. The catalysed reaction is alpha-ribazole + adenosylcob(III)inamide-GDP = adenosylcob(III)alamin + GMP + H(+). It catalyses the reaction alpha-ribazole 5'-phosphate + adenosylcob(III)inamide-GDP = adenosylcob(III)alamin 5'-phosphate + GMP + H(+). Its pathway is cofactor biosynthesis; adenosylcobalamin biosynthesis; adenosylcobalamin from cob(II)yrinate a,c-diamide: step 7/7. Joins adenosylcobinamide-GDP and alpha-ribazole to generate adenosylcobalamin (Ado-cobalamin). Also synthesizes adenosylcobalamin 5'-phosphate from adenosylcobinamide-GDP and alpha-ribazole 5'-phosphate. The chain is Adenosylcobinamide-GDP ribazoletransferase from Alkaliphilus metalliredigens (strain QYMF).